A 325-amino-acid polypeptide reads, in one-letter code: GMP reductase (325 aa).

Cys174 serves as the catalytic Thioimidate intermediate. 203 to 226 (LIADGGIRTHGDIAKSIRFGATMV) contacts NADP(+).

Belongs to the IMPDH/GMPR family. GuaC type 2 subfamily.

The enzyme catalyses IMP + NH4(+) + NADP(+) = GMP + NADPH + 2 H(+). In terms of biological role, catalyzes the irreversible NADPH-dependent deamination of GMP to IMP. It functions in the conversion of nucleobase, nucleoside and nucleotide derivatives of G to A nucleotides, and in maintaining the intracellular balance of A and G nucleotides. This is GMP reductase from Pediococcus pentosaceus (strain ATCC 25745 / CCUG 21536 / LMG 10740 / 183-1w).